The primary structure comprises 94 residues: MKTLLLTLVVVTIMCLDLGYTTKCYKTGERIISETCPPGQDLCYMKTWCDVFCGSRGRVIELGCTATCPTVKHHEQITCCSTDNCNPHPKMKQR.

An N-terminal signal peptide occupies residues 1-21 (MKTLLLTLVVVTIMCLDLGYT). 5 disulfides stabilise this stretch: Cys24/Cys43, Cys36/Cys64, Cys49/Cys53, Cys68/Cys79, and Cys80/Cys85.

It belongs to the three-finger toxin family. Long-chain subfamily. Type II alpha-neurotoxin sub-subfamily. Expressed by the venom gland.

The protein localises to the secreted. In terms of biological role, binds with high affinity to muscular (alpha-1/CHRNA1) and neuronal (alpha-7/CHRNA7) nicotinic acetylcholine receptor (nAChR) and inhibits acetylcholine from binding to the receptor, thereby impairing neuromuscular and neuronal transmission. The sequence is that of Long neurotoxin LNTX37 from Ophiophagus hannah (King cobra).